Here is a 494-residue protein sequence, read N- to C-terminus: Cobyric acid synthase (494 aa).

The GATase cobBQ-type domain occupies 248–444; the sequence is EIEIAIIKLP…LHGIFENDEW (197 aa). Cysteine 329 (nucleophile) is an active-site residue. Residue histidine 436 is part of the active site.

Belongs to the CobB/CobQ family. CobQ subfamily.

Its pathway is cofactor biosynthesis; adenosylcobalamin biosynthesis. Its function is as follows. Catalyzes amidations at positions B, D, E, and G on adenosylcobyrinic A,C-diamide. NH(2) groups are provided by glutamine, and one molecule of ATP is hydrogenolyzed for each amidation. The chain is Cobyric acid synthase from Prochlorococcus marinus (strain NATL1A).